Consider the following 133-residue polypeptide: Small ribosomal subunit protein uS8 (133 aa).

It belongs to the universal ribosomal protein uS8 family. In terms of assembly, part of the 30S ribosomal subunit.

One of the primary rRNA binding proteins, it binds directly to 16S rRNA central domain where it helps coordinate assembly of the platform of the 30S subunit. The polypeptide is Small ribosomal subunit protein uS8 (Staphylothermus marinus (strain ATCC 43588 / DSM 3639 / JCM 9404 / F1)).